A 360-amino-acid chain; its full sequence is Molybdenum import ATP-binding protein ModC (360 aa).

The region spanning 5-234 is the ABC transporter domain; the sequence is VKLHLGYQDF…LDLPLALGDD (230 aa). 32-39 is a binding site for ATP; the sequence is GHSGSGKT. The region spanning 295-360 is the Mop domain; it reads HSSILNRLPV…AQIKAVAVLA (66 aa).

The protein belongs to the ABC transporter superfamily. Molybdate importer (TC 3.A.1.8) family. In terms of assembly, the complex is composed of two ATP-binding proteins (ModC), two transmembrane proteins (ModB) and a solute-binding protein (ModA).

It localises to the cell inner membrane. It catalyses the reaction molybdate(out) + ATP + H2O = molybdate(in) + ADP + phosphate + H(+). Functionally, part of the ABC transporter complex ModABC involved in molybdenum import. Responsible for energy coupling to the transport system. The sequence is that of Molybdenum import ATP-binding protein ModC from Pseudomonas fluorescens (strain ATCC BAA-477 / NRRL B-23932 / Pf-5).